We begin with the raw amino-acid sequence, 99 residues long: Putative membrane protein insertion efficiency factor (99 aa).

It belongs to the UPF0161 family.

The protein localises to the cell membrane. In terms of biological role, could be involved in insertion of integral membrane proteins into the membrane. This chain is Putative membrane protein insertion efficiency factor, found in Corynebacterium glutamicum (strain ATCC 13032 / DSM 20300 / JCM 1318 / BCRC 11384 / CCUG 27702 / LMG 3730 / NBRC 12168 / NCIMB 10025 / NRRL B-2784 / 534).